Reading from the N-terminus, the 1022-residue chain is Protein trachealess (1022 aa).

A bHLH domain is found at 86–139 (LRKEKSRDAARSRRGKENYEFYELAKMLPLPAAITSQLDKASIIRLTISYLKLR). The 71-residue stretch at 174-244 (EQHQGTHILQ…DQLGLSLTSG (71 aa)) folds into the PAS 1 domain. The tract at residues 239 to 289 (LSLTSGGGGGGGSSSSGGGGGGAGGGMASPTSGASDDGSGTHGTNNPDVAA) is disordered. Residues 243-265 (SGGGGGGGSSSSGGGGGGAGGGM) show a composition bias toward gly residues. A compositionally biased stretch (polar residues) spans 280–289 (HGTNNPDVAA). The region spanning 391–461 (PPPSVHEIRL…KSHSDLIEKG (71 aa)) is the PAS 2 domain. The PAC domain maps to 465–508 (TGYYRLMNKSGGYTWLQTCATVVCSTKNADEQNIICVNYVISNR). Disordered stretches follow at residues 525–686 (DSIK…ADSA), 849–896 (AMTP…GDVV), and 962–996 (DDQGQVPPSCQDQYHHHHHHHHHQDGSAGSSASQA). Composition is skewed to low complexity over residues 578–587 (RSAAASHGSS) and 611–625 (PTTVATPVPAATPPV). A Nuclear localization signal motif is present at residues 629 to 636 (KRKRKTKA). A Phosphoserine; by PKB/Akt1 modification is found at S673. The segment covering 851–864 (TPPSSVSPRDSNQP) has biased composition (polar residues). Positions 987–996 (GSAGSSASQA) are enriched in low complexity.

Efficient DNA binding requires dimerization with another bHLH protein. Heterodimer with tgo. In terms of processing, ser-673 phosphorylation by PKB/Akt1 is required for nuclear targeting and transcriptional activity. In terms of tissue distribution, trachea, salivary gland ducts, posterior spiracles (Filzkoeper primordia) and a subset of cells in the CNS.

It is found in the nucleus. Functionally, transcription factor, master regulator of tracheal cell fates in the embryo, necessary for the development of the salivary gland duct, Malpighian tubules and the posterior spiracles. It may induce a general fate of branched tubular structures of epithelial origin. Functions with tgo to regulate expression of btl. In Drosophila melanogaster (Fruit fly), this protein is Protein trachealess (trh).